A 211-amino-acid chain; its full sequence is 3-demethoxyubiquinol 3-hydroxylase (211 aa).

Residues Glu-60, Glu-90, His-93, Glu-142, Glu-174, and His-177 each coordinate Fe cation.

It belongs to the COQ7 family. Fe cation serves as cofactor.

Its subcellular location is the cell membrane. It catalyses the reaction a 5-methoxy-2-methyl-3-(all-trans-polyprenyl)benzene-1,4-diol + AH2 + O2 = a 3-demethylubiquinol + A + H2O. Its pathway is cofactor biosynthesis; ubiquinone biosynthesis. In terms of biological role, catalyzes the hydroxylation of 2-nonaprenyl-3-methyl-6-methoxy-1,4-benzoquinol during ubiquinone biosynthesis. The chain is 3-demethoxyubiquinol 3-hydroxylase from Acinetobacter baumannii (strain AB307-0294).